A 190-amino-acid chain; its full sequence is Superoxide dismutase [Cu-Zn] (190 aa).

Residues 1–23 (MKLTNLALAFTLFGASAVAFAHA) form the signal peptide. Residues His83, His85, and His108 each contribute to the Cu cation site. A disulfide bridge connects residues Cys90 and Cys186. 4 residues coordinate Zn(2+): His108, His117, His126, and Asp129. A disordered region spans residues 162–181 (MIHEGGDNHSDHPAPLGGGG). Residue His164 coordinates Cu cation.

It belongs to the Cu-Zn superoxide dismutase family. Homodimer. Cu cation is required as a cofactor. The cofactor is Zn(2+).

The protein resides in the periplasm. The catalysed reaction is 2 superoxide + 2 H(+) = H2O2 + O2. Functionally, destroys radicals which are normally produced within the cells and which are toxic to biological systems. This chain is Superoxide dismutase [Cu-Zn] (sodC), found in Actinobacillus pleuropneumoniae (Haemophilus pleuropneumoniae).